The chain runs to 92 residues: MPRSLKKGPFIDLHLLKKVEKAVESGDKKPIKTWSRRSMIIPTMINLTIAVHNGRQHVPVFVTEDMIGHKLGEFAPTRTYRGHAADKKAKKR.

The protein belongs to the universal ribosomal protein uS19 family.

Protein S19 forms a complex with S13 that binds strongly to the 16S ribosomal RNA. In Aliivibrio salmonicida (strain LFI1238) (Vibrio salmonicida (strain LFI1238)), this protein is Small ribosomal subunit protein uS19.